A 199-amino-acid chain; its full sequence is Pyridoxine/pyridoxamine 5'-phosphate oxidase (199 aa).

Residues 45 to 50 (RVVLLK), 60 to 61 (FT), R66, K67, and Q89 contribute to the FMN site. K50 provides a ligand contact to substrate. The substrate site is built by Y107, R111, and S115. FMN is bound by residues 124–125 (QS) and W169. Position 175-177 (175-177 (RIH)) interacts with substrate. Position 179 (R179) interacts with FMN.

It belongs to the pyridoxamine 5'-phosphate oxidase family. In terms of assembly, homodimer. FMN serves as cofactor.

The catalysed reaction is pyridoxamine 5'-phosphate + O2 + H2O = pyridoxal 5'-phosphate + H2O2 + NH4(+). It catalyses the reaction pyridoxine 5'-phosphate + O2 = pyridoxal 5'-phosphate + H2O2. The protein operates within cofactor metabolism; pyridoxal 5'-phosphate salvage; pyridoxal 5'-phosphate from pyridoxamine 5'-phosphate: step 1/1. It participates in cofactor metabolism; pyridoxal 5'-phosphate salvage; pyridoxal 5'-phosphate from pyridoxine 5'-phosphate: step 1/1. Functionally, catalyzes the oxidation of either pyridoxine 5'-phosphate (PNP) or pyridoxamine 5'-phosphate (PMP) into pyridoxal 5'-phosphate (PLP). The sequence is that of Pyridoxine/pyridoxamine 5'-phosphate oxidase from Ehrlichia chaffeensis (strain ATCC CRL-10679 / Arkansas).